The primary structure comprises 168 residues: MTTDSASNGNGSAQQPSPSLNILAQYVKDLSFENPGAPRSLQARDRSPAININVNVNANPLAENDFDVVLSLSAQAKDGDKMLFNVELAYGGVFRVAGFPQEHMLPLLFIECPRLLFPFARQIVADATRNGGFPPLMIDPIDFAQMFAQRMAEEKVRAQVANTNDTAN.

It belongs to the SecB family. Homotetramer, a dimer of dimers. One homotetramer interacts with 1 SecA dimer.

Its subcellular location is the cytoplasm. One of the proteins required for the normal export of preproteins out of the cell cytoplasm. It is a molecular chaperone that binds to a subset of precursor proteins, maintaining them in a translocation-competent state. It also specifically binds to its receptor SecA. This is Protein-export protein SecB from Sinorhizobium medicae (strain WSM419) (Ensifer medicae).